Consider the following 795-residue polypeptide: Phenylalanine--tRNA ligase beta subunit (795 aa).

The tRNA-binding domain occupies 39–148; that stretch reads AAEFNGVVIG…LDAPLGTDLR (110 aa). The 76-residue stretch at 401–476 folds into the B5 domain; it reads PKPAQILLRR…RIYGYNNIPN (76 aa). Residues Asp-454, Asp-460, Glu-463, and Glu-464 each contribute to the Mg(2+) site. In terms of domain architecture, FDX-ACB spans 701–794; the sequence is SKFPANRRDI…LKTEFNASLR (94 aa).

Belongs to the phenylalanyl-tRNA synthetase beta subunit family. Type 1 subfamily. As to quaternary structure, tetramer of two alpha and two beta subunits. Mg(2+) serves as cofactor.

It localises to the cytoplasm. The catalysed reaction is tRNA(Phe) + L-phenylalanine + ATP = L-phenylalanyl-tRNA(Phe) + AMP + diphosphate + H(+). This is Phenylalanine--tRNA ligase beta subunit from Shewanella oneidensis (strain ATCC 700550 / JCM 31522 / CIP 106686 / LMG 19005 / NCIMB 14063 / MR-1).